The chain runs to 109 residues: Hainantoxin-XVIII-2 (109 aa).

The N-terminal stretch at 1 to 18 (MKLSIIIIATSLVIAVVA) is a signal peptide. Residues 19–46 (FPSKDSKAIENDKTEQRMEIVVQETARA) constitute a propeptide that is removed on maturation. 3 disulfides stabilise this stretch: cysteine 47-cysteine 62, cysteine 59-cysteine 108, and cysteine 61-cysteine 81.

The protein belongs to the neurotoxin 25 family. F7 subfamily. As to expression, expressed by the venom gland.

It is found in the secreted. Functionally, putative ion channel inhibitor. The chain is Hainantoxin-XVIII-2 from Cyriopagopus hainanus (Chinese bird spider).